Reading from the N-terminus, the 447-residue chain is Methylenetetrahydrofolate--tRNA-(uracil-5-)-methyltransferase TrmFO (447 aa).

13–18 (GAGLAG) contributes to the FAD binding site.

It belongs to the MnmG family. TrmFO subfamily. It depends on FAD as a cofactor.

It localises to the cytoplasm. The catalysed reaction is uridine(54) in tRNA + (6R)-5,10-methylene-5,6,7,8-tetrahydrofolate + NADH + H(+) = 5-methyluridine(54) in tRNA + (6S)-5,6,7,8-tetrahydrofolate + NAD(+). The enzyme catalyses uridine(54) in tRNA + (6R)-5,10-methylene-5,6,7,8-tetrahydrofolate + NADPH + H(+) = 5-methyluridine(54) in tRNA + (6S)-5,6,7,8-tetrahydrofolate + NADP(+). Functionally, catalyzes the folate-dependent formation of 5-methyl-uridine at position 54 (M-5-U54) in all tRNAs. In Streptococcus thermophilus (strain ATCC BAA-250 / LMG 18311), this protein is Methylenetetrahydrofolate--tRNA-(uracil-5-)-methyltransferase TrmFO.